Reading from the N-terminus, the 1113-residue chain is Antigenic protein P1 (1113 aa).

Residues 7–27 (IIAVVAIASAIVTGVVVIVVV) form a helical membrane-spanning segment. N121, N207, N225, N233, N274, N533, N576, N622, N675, N679, N730, N753, N880, N899, N907, N972, and N995 each carry an N-linked (GlcNAc...) asparagine glycan. The 315-residue stretch at 159 to 473 (VFGQRAVAWA…SYVNMAHAFG (315 aa)) folds into the Peptidase M60 domain. The region spanning 648-800 (LDPHQVEYEV…TEESSVDVSK (153 aa)) is the PA14 domain.

The protein resides in the membrane. This Entamoeba histolytica (strain ATCC 30459 / HM-1:IMSS / ABRM) protein is Antigenic protein P1.